Here is a 499-residue protein sequence, read N- to C-terminus: Alpha-amylase B (499 aa).

The first 21 residues, 1 to 21 (MMVAWWSLFLYGLQVAAPALA), serve as a signal peptide directing secretion. A disulfide bond links Cys51 and Cys59. Gln56 and Trp104 together coordinate substrate. Asn142 contacts Ca(2+). His143 lines the substrate pocket. Cys171 and Cys185 are disulfide-bonded. 2 residues coordinate Ca(2+): Glu183 and Asp196. N-linked (GlcNAc...) asparagine glycosylation occurs at Asn218. Residue Arg225 coordinates substrate. The Ca(2+) site is built by Asp227, His231, and Glu251. Asp227 functions as the Nucleophile in the catalytic mechanism. 230–231 (KH) is a substrate binding site. The active-site Proton donor is Glu251. Substrate is bound at residue Gly255. Cys261 and Cys304 are joined by a disulfide. Residues Asp318 and Arg365 each contribute to the substrate site. Residues Cys461 and Cys496 are joined by a disulfide bond.

Belongs to the glycosyl hydrolase 13 family. It depends on Ca(2+) as a cofactor.

The catalysed reaction is Endohydrolysis of (1-&gt;4)-alpha-D-glucosidic linkages in polysaccharides containing three or more (1-&gt;4)-alpha-linked D-glucose units.. This Aspergillus awamori (Black koji mold) protein is Alpha-amylase B (amyB).